The primary structure comprises 486 residues: Ribulose bisphosphate carboxylase large chain (486 aa).

Positions 125 and 175 each coordinate substrate. K177 acts as the Proton acceptor in catalysis. Residue K179 participates in substrate binding. Residues K203, D205, and E206 each contribute to the Mg(2+) site. K203 is subject to N6-carboxylysine. The Proton acceptor role is filled by H295. The substrate site is built by R296, H328, and S380.

It belongs to the RuBisCO large chain family. Type I subfamily. In terms of assembly, heterohexadecamer of 8 large chains and 8 small chains. Mg(2+) serves as cofactor.

The catalysed reaction is 2 (2R)-3-phosphoglycerate + 2 H(+) = D-ribulose 1,5-bisphosphate + CO2 + H2O. The enzyme catalyses D-ribulose 1,5-bisphosphate + O2 = 2-phosphoglycolate + (2R)-3-phosphoglycerate + 2 H(+). RuBisCO catalyzes two reactions: the carboxylation of D-ribulose 1,5-bisphosphate, the primary event in carbon dioxide fixation, as well as the oxidative fragmentation of the pentose substrate. Both reactions occur simultaneously and in competition at the same active site. The protein is Ribulose bisphosphate carboxylase large chain of Bradyrhizobium diazoefficiens (strain JCM 10833 / BCRC 13528 / IAM 13628 / NBRC 14792 / USDA 110).